A 339-amino-acid chain; its full sequence is Thermospermine synthase ACAULIS5 (339 aa).

Residues 33–270 (CHWYEETIDD…DTWGWVMASD (238 aa)) form the PABS domain. Residues Gln62, Glu117, Asp137, and 168–169 (DA) each bind S-adenosyl 3-(methylsulfanyl)propylamine. Residue Asp186 is the Proton acceptor of the active site.

The protein belongs to the spermidine/spermine synthase family. As to expression, highly expressed in stem internodes and roots. Lower levels in young seedlings before flowering and rosette leaves. Expressed in the vascular tissues. Restricted to procambial and/or provascular cells during primary root development and early leaves development.

It catalyses the reaction S-adenosyl 3-(methylsulfanyl)propylamine + spermidine = thermospermine + S-methyl-5'-thioadenosine + H(+). Required for correct xylem specification through regulation of the lifetime of the xylem elements. Prevents premature death of the xylem vessel elements. The sequence is that of Thermospermine synthase ACAULIS5 (ACL5) from Arabidopsis thaliana (Mouse-ear cress).